We begin with the raw amino-acid sequence, 602 residues long: Pro-neuregulin-1, membrane-bound isoform (602 aa).

Over 1-206 (MWATSEGPLQ…MEAEELYQKR (206 aa)) the chain is Extracellular. N-linked (GlcNAc...) asparagine glycosylation occurs at asparagine 21. An Ig-like C2-type domain is found at 29 to 123 (PKLKEMKNQE…DSTKASVIIT (95 aa)). Residues cysteine 49 and cysteine 105 are joined by a disulfide bond. 2 N-linked (GlcNAc...) asparagine glycosylation sites follow: asparagine 113 and asparagine 126. The region spanning 137 to 181 (HLTKCDIKQKAFCVNGGECYMVKDLPNPPRYLCRCPNEFTGDRCQ) is the EGF-like domain. 3 disulfides stabilise this stretch: cysteine 141–cysteine 155, cysteine 149–cysteine 169, and cysteine 171–cysteine 180. A helical transmembrane segment spans residues 207-229 (VLTITGICIALLVVGIMCVVAYC). Residues 230 to 602 (KTKKQRKKLH…VIANQDPIAV (373 aa)) lie on the Cytoplasmic side of the membrane. 4 disordered regions span residues 293 to 366 (ETSF…EGNS), 391 to 421 (MTTP…PVSS), 460 to 479 (FNSF…PSPL), and 486 to 553 (EYET…FLSI). Low complexity predominate over residues 294 to 314 (TSFSTSHYTSTTHHSMTVTQT). Residues 315-324 (PSHSWSNGHT) show a composition bias toward polar residues. Positions 325-341 (ESILSESHSVLVSSSVE) are enriched in low complexity. Polar residues predominate over residues 460 to 474 (FNSFHNNPTHESNSL). The span at 504 to 514 (TNSRRVKRTKP) shows a compositional bias: basic residues. A compositionally biased stretch (low complexity) spans 527–536 (DTSSQSTSSE).

Belongs to the neuregulin family. Proteolytic cleavage close to the plasma membrane on the external face leads to the release of the soluble growth factor form. Post-translationally, extensive glycosylation precedes the proteolytic cleavage.

It localises to the cell membrane. The protein localises to the secreted. Direct ligand for the ERBB tyrosine kinase receptors. The multiple isoforms perform diverse functions: cysteine-rich domain containing isoforms (isoform 2-isoform 4) probably regulate the expression of nicotinic acetylcholine receptors at developing interneuronal synapses. Isoform Ig-NRG is required for the initial induction and/or maintenance of the mature levels of acetylcholine receptors at neuromuscular synapses. Binds to ERBB3 and integrins to form a complex which is essential for NRG1-ERBB signaling. The protein is Pro-neuregulin-1, membrane-bound isoform (NRG1) of Gallus gallus (Chicken).